The following is a 430-amino-acid chain: MHDIRAIRENPAAFDAALSRRGSAPVSSDILALDEARRGKILAAETAQADQNKASKEVGAAKARGDEAEFERLRALVAEKKAEIAAMQAEAKELDTQLSELLAGLPNLPAEDVPQGADEADNVELHRWGTPREMDFAPKEHFDLASVQDGMDFETAAKLSGARFVLLSGAVARIHRALAQFMLDTHSEQNGLTEVNGPVLVLSEMMYGTGQLPKFGEDSYQTREGWWLIPTSEVSLTNIVNGSTIAEDYLPRRYTAHSLCFRSEAGSAGKDTRGMLRQHQFEKVEMVSVTHPDHSDAEQKRMLRCAEGILEALGIPYRTIVLCTGDMGFGARRTYDIEAWLPGQNTYREISSVSTCGDFQARRMNARFKPADGGKPQFVHTLNGSGLAVGRCLIAVLENGQNADGSVTLPQALAPYLGGKLTLNTDGTLN.

231–233 serves as a coordination point for L-serine; it reads TSE. Residue 262–264 participates in ATP binding; that stretch reads RSE. Residue E285 coordinates L-serine. 349-352 is a binding site for ATP; it reads EISS. S385 is a binding site for L-serine.

Belongs to the class-II aminoacyl-tRNA synthetase family. Type-1 seryl-tRNA synthetase subfamily. In terms of assembly, homodimer. The tRNA molecule binds across the dimer.

The protein resides in the cytoplasm. The enzyme catalyses tRNA(Ser) + L-serine + ATP = L-seryl-tRNA(Ser) + AMP + diphosphate + H(+). The catalysed reaction is tRNA(Sec) + L-serine + ATP = L-seryl-tRNA(Sec) + AMP + diphosphate + H(+). It participates in aminoacyl-tRNA biosynthesis; selenocysteinyl-tRNA(Sec) biosynthesis; L-seryl-tRNA(Sec) from L-serine and tRNA(Sec): step 1/1. Functionally, catalyzes the attachment of serine to tRNA(Ser). Is also able to aminoacylate tRNA(Sec) with serine, to form the misacylated tRNA L-seryl-tRNA(Sec), which will be further converted into selenocysteinyl-tRNA(Sec). This is Serine--tRNA ligase from Ruegeria pomeroyi (strain ATCC 700808 / DSM 15171 / DSS-3) (Silicibacter pomeroyi).